A 525-amino-acid chain; its full sequence is ATP synthase subunit alpha (525 aa).

171 to 178 is an ATP binding site; that stretch reads GDRQTGKS.

This sequence belongs to the ATPase alpha/beta chains family. As to quaternary structure, F-type ATPases have 2 components, CF(1) - the catalytic core - and CF(0) - the membrane proton channel. CF(1) has five subunits: alpha(3), beta(3), gamma(1), delta(1), epsilon(1). CF(0) has three main subunits: a(1), b(2) and c(9-12). The alpha and beta chains form an alternating ring which encloses part of the gamma chain. CF(1) is attached to CF(0) by a central stalk formed by the gamma and epsilon chains, while a peripheral stalk is formed by the delta and b chains.

Its subcellular location is the cell inner membrane. It catalyses the reaction ATP + H2O + 4 H(+)(in) = ADP + phosphate + 5 H(+)(out). Functionally, produces ATP from ADP in the presence of a proton gradient across the membrane. The alpha chain is a regulatory subunit. This chain is ATP synthase subunit alpha, found in Flavobacterium johnsoniae (strain ATCC 17061 / DSM 2064 / JCM 8514 / BCRC 14874 / CCUG 350202 / NBRC 14942 / NCIMB 11054 / UW101) (Cytophaga johnsonae).